The primary structure comprises 350 residues: DNA-directed RNA polymerase subunit alpha (350 aa).

The interval 1 to 226 (MLISQRPTLS…ELFGLARELN (226 aa)) is alpha N-terminal domain (alpha-NTD). The alpha C-terminal domain (alpha-CTD) stretch occupies residues 241–350 (ADHIASFALP…NQDYAETEQL (110 aa)). A disordered region spans residues 326-350 (ATGTWNSDAGYDLEDNQDYAETEQL). A compositionally biased stretch (acidic residues) spans 336 to 350 (YDLEDNQDYAETEQL).

It belongs to the RNA polymerase alpha chain family. Homodimer. The RNAP catalytic core consists of 2 alpha, 1 beta, 1 beta' and 1 omega subunit. When a sigma factor is associated with the core the holoenzyme is formed, which can initiate transcription.

The catalysed reaction is RNA(n) + a ribonucleoside 5'-triphosphate = RNA(n+1) + diphosphate. Its function is as follows. DNA-dependent RNA polymerase catalyzes the transcription of DNA into RNA using the four ribonucleoside triphosphates as substrates. In Mycobacterium sp. (strain JLS), this protein is DNA-directed RNA polymerase subunit alpha.